The following is a 338-amino-acid chain: Ketol-acid reductoisomerase (NADP(+)) (338 aa).

A KARI N-terminal Rossmann domain is found at 1-181 (MNVFYDKDAD…GGGRAGIIET (181 aa)). Residues 24–27 (YGSQ), Arg-47, and Ser-52 contribute to the NADP(+) site. The active site involves His-107. Gly-133 contributes to the NADP(+) binding site. The 146-residue stretch at 182–327 (NFREETETDL…AKLRAMMPWI (146 aa)) folds into the KARI C-terminal knotted domain. Mg(2+) contacts are provided by Asp-190, Glu-194, Glu-226, and Glu-230. Ser-251 contacts substrate.

It belongs to the ketol-acid reductoisomerase family. Mg(2+) serves as cofactor.

It catalyses the reaction (2R)-2,3-dihydroxy-3-methylbutanoate + NADP(+) = (2S)-2-acetolactate + NADPH + H(+). The catalysed reaction is (2R,3R)-2,3-dihydroxy-3-methylpentanoate + NADP(+) = (S)-2-ethyl-2-hydroxy-3-oxobutanoate + NADPH + H(+). Its pathway is amino-acid biosynthesis; L-isoleucine biosynthesis; L-isoleucine from 2-oxobutanoate: step 2/4. The protein operates within amino-acid biosynthesis; L-valine biosynthesis; L-valine from pyruvate: step 2/4. Functionally, involved in the biosynthesis of branched-chain amino acids (BCAA). Catalyzes an alkyl-migration followed by a ketol-acid reduction of (S)-2-acetolactate (S2AL) to yield (R)-2,3-dihydroxy-isovalerate. In the isomerase reaction, S2AL is rearranged via a Mg-dependent methyl migration to produce 3-hydroxy-3-methyl-2-ketobutyrate (HMKB). In the reductase reaction, this 2-ketoacid undergoes a metal-dependent reduction by NADPH to yield (R)-2,3-dihydroxy-isovalerate. This Burkholderia lata (strain ATCC 17760 / DSM 23089 / LMG 22485 / NCIMB 9086 / R18194 / 383) protein is Ketol-acid reductoisomerase (NADP(+)).